The chain runs to 594 residues: (E)-beta-ocimene synthase TPS6FN (594 aa).

Residues arginine 303, aspartate 340, aspartate 344, arginine 489, and asparagine 492 each coordinate (2E)-geranyl diphosphate. Residues aspartate 340 and aspartate 344 each coordinate Mg(2+). A DDXXD motif motif is present at residues 340–344; sequence DDIYD. Mg(2+)-binding residues include asparagine 492, threonine 496, and glutamate 500.

It belongs to the terpene synthase family. Tpsb subfamily. The cofactor is Mg(2+). It depends on Mn(2+) as a cofactor. As to expression, expressed in glandular trichomes two to four weeks after flowering onset.

It carries out the reaction (2E)-geranyl diphosphate = (E)-beta-ocimene + diphosphate. The catalysed reaction is (2E)-geranyl diphosphate = (Z)-beta-ocimene + diphosphate. It functions in the pathway secondary metabolite biosynthesis; terpenoid biosynthesis. Its function is as follows. Involved in monoterpene (C10) olefins biosynthesis, constituants of cannabinoids and terpenoids-rich resins. Catalyzes mainly the conversion of (2E)-geranyl diphosphate to (E)-beta-ocimene, and also produces minor products such as (Z)-beta-ocimene. This chain is (E)-beta-ocimene synthase TPS6FN, found in Cannabis sativa (Hemp).